Here is a 172-residue protein sequence, read N- to C-terminus: Large ribosomal subunit protein uL10 (172 aa).

This sequence belongs to the universal ribosomal protein uL10 family. In terms of assembly, part of the ribosomal stalk of the 50S ribosomal subunit. The N-terminus interacts with L11 and the large rRNA to form the base of the stalk. The C-terminus forms an elongated spine to which L12 dimers bind in a sequential fashion forming a multimeric L10(L12)X complex.

Functionally, forms part of the ribosomal stalk, playing a central role in the interaction of the ribosome with GTP-bound translation factors. The polypeptide is Large ribosomal subunit protein uL10 (Francisella philomiragia subsp. philomiragia (strain ATCC 25017 / CCUG 19701 / FSC 153 / O#319-036)).